Consider the following 310-residue polypeptide: Porphobilinogen deaminase (310 aa).

Cys-242 is modified (S-(dipyrrolylmethanemethyl)cysteine).

It belongs to the HMBS family. In terms of assembly, monomer. Requires dipyrromethane as cofactor.

The catalysed reaction is 4 porphobilinogen + H2O = hydroxymethylbilane + 4 NH4(+). The protein operates within porphyrin-containing compound metabolism; protoporphyrin-IX biosynthesis; coproporphyrinogen-III from 5-aminolevulinate: step 2/4. Its function is as follows. Tetrapolymerization of the monopyrrole PBG into the hydroxymethylbilane pre-uroporphyrinogen in several discrete steps. The protein is Porphobilinogen deaminase of Shewanella pealeana (strain ATCC 700345 / ANG-SQ1).